We begin with the raw amino-acid sequence, 350 residues long: UDP-N-acetylenolpyruvoylglucosamine reductase (350 aa).

One can recognise an FAD-binding PCMH-type domain in the interval 24–195; the sequence is HVEATARWLL…VAVEFNLPLL (172 aa). Arg172 is a catalytic residue. The Proton donor role is filled by Ser245. Glu342 is a catalytic residue.

Belongs to the MurB family. It depends on FAD as a cofactor.

It is found in the cytoplasm. It carries out the reaction UDP-N-acetyl-alpha-D-muramate + NADP(+) = UDP-N-acetyl-3-O-(1-carboxyvinyl)-alpha-D-glucosamine + NADPH + H(+). It functions in the pathway cell wall biogenesis; peptidoglycan biosynthesis. Functionally, cell wall formation. This Xanthomonas oryzae pv. oryzae (strain PXO99A) protein is UDP-N-acetylenolpyruvoylglucosamine reductase.